The following is a 560-amino-acid chain: Cilia- and flagella-associated protein 184 (560 aa).

Over residues 1 to 12 the composition is skewed to basic and acidic residues; that stretch reads MEGGSEHTKDPG. The tract at residues 1–209 is disordered; sequence MEGGSEHTKD…QEEGKPLGGR (209 aa). 2 stretches are compositionally biased toward acidic residues: residues 41-61 and 101-110; these read GELESEPEEEEEEEEEEEEEA and EPEEPAEAGA. 2 stretches are compositionally biased toward basic and acidic residues: residues 127 to 144 and 179 to 209; these read AEARAEELEQAAEGKEVR and ETRRDGAESEGRAGEGRPAKSQEEGKPLGGR. Coiled-coil stretches lie at residues 357–481 and 510–536; these read QAAL…QGRD and DSLLRDLEEKVDKTQLLHQRLESLKRH.

It belongs to the CFAP184 family. In terms of assembly, forms a complex with CFAP263; the interaction is required for functional activity in cilia.

It localises to the cell projection. It is found in the cilium. Its subcellular location is the cytoplasm. The protein resides in the cytoskeleton. The protein localises to the microtubule organizing center. It localises to the centrosome. In terms of biological role, in complex with CFAP263, acts as a regulator of ciliary beating that connects radial spoke 3 (RS3) to the inner dynein arm (IDA) and the nexin-dynein regulatory complex (N-DRC). The complex is positioned parallel to N-DRC and forms a connection between the arch at the base of RS3, the IDA tail and N-DRC. In Macaca fascicularis (Crab-eating macaque), this protein is Cilia- and flagella-associated protein 184 (CFAP184).